The chain runs to 403 residues: DNA polymerase IV (403 aa).

A UmuC domain is found at 23 to 203; that stretch reads IAHMDCDAFY…KPVNILPGVG (181 aa). Mg(2+) is bound by residues Asp27 and Asp120. Glu121 is a catalytic residue.

This sequence belongs to the DNA polymerase type-Y family. In terms of assembly, monomer. The cofactor is Mg(2+).

Its subcellular location is the cytoplasm. It carries out the reaction DNA(n) + a 2'-deoxyribonucleoside 5'-triphosphate = DNA(n+1) + diphosphate. Functionally, poorly processive, error-prone DNA polymerase involved in untargeted mutagenesis. Copies undamaged DNA at stalled replication forks, which arise in vivo from mismatched or misaligned primer ends. These misaligned primers can be extended by PolIV. Exhibits no 3'-5' exonuclease (proofreading) activity. May be involved in translesional synthesis, in conjunction with the beta clamp from PolIII. The sequence is that of DNA polymerase IV from Caulobacter vibrioides (strain ATCC 19089 / CIP 103742 / CB 15) (Caulobacter crescentus).